A 336-amino-acid chain; its full sequence is Serpentine receptor class gamma-13 (336 aa).

The next 8 helical transmembrane spans lie at 32 to 52 (LKYIIQVTLLSINFILNFLII), 68 to 88 (FFIIYAADLIMGMYMSLSEIL), 93 to 113 (FIYVTLLCPILAPYFFTPSIF), 133 to 153 (VFLSFNRMTCVVFPVGYSAIW), 156 to 176 (ILTPIIIVLFVLPIGIIWNVL), 210 to 230 (FIVSLILIIVISGVTLYALLI), 246 to 266 (TMVLSLEFSFLSVIQIYFAFF), and 277 to 297 (LLRVMYFTYDLLNFSTTIIFI).

This sequence belongs to the nematode receptor-like protein srg family.

It is found in the membrane. In Caenorhabditis elegans, this protein is Serpentine receptor class gamma-13 (srg-13).